We begin with the raw amino-acid sequence, 266 residues long: Phosphate import ATP-binding protein PstB 2 (266 aa).

The ABC transporter domain occupies 13–252; it reads LEAQGVNVYY…GPTEEIFQNP (240 aa). An ATP-binding site is contributed by 45–52; it reads GPSGCGKS.

Belongs to the ABC transporter superfamily. Phosphate importer (TC 3.A.1.7) family. In terms of assembly, the complex is composed of two ATP-binding proteins (PstB), two transmembrane proteins (PstC and PstA) and a solute-binding protein (PstS).

It is found in the cell inner membrane. The enzyme catalyses phosphate(out) + ATP + H2O = ADP + 2 phosphate(in) + H(+). Functionally, part of the ABC transporter complex PstSACB involved in phosphate import. Responsible for energy coupling to the transport system. This chain is Phosphate import ATP-binding protein PstB 2, found in Synechocystis sp. (strain ATCC 27184 / PCC 6803 / Kazusa).